We begin with the raw amino-acid sequence, 266 residues long: Glucosamine-6-phosphate deaminase (266 aa).

Catalysis depends on Asp-72, which acts as the Proton acceptor; for enolization step. The active-site For ring-opening step is the Asp-141. The active-site Proton acceptor; for ring-opening step is His-143. Glu-148 acts as the For ring-opening step in catalysis.

Belongs to the glucosamine/galactosamine-6-phosphate isomerase family. NagB subfamily. In terms of assembly, homohexamer.

It carries out the reaction alpha-D-glucosamine 6-phosphate + H2O = beta-D-fructose 6-phosphate + NH4(+). It functions in the pathway amino-sugar metabolism; N-acetylneuraminate degradation; D-fructose 6-phosphate from N-acetylneuraminate: step 5/5. Its activity is regulated as follows. Allosterically activated by N-acetylglucosamine 6-phosphate (GlcNAc6P). Its function is as follows. Catalyzes the reversible isomerization-deamination of glucosamine 6-phosphate (GlcN6P) to form fructose 6-phosphate (Fru6P) and ammonium ion. The chain is Glucosamine-6-phosphate deaminase from Yersinia pseudotuberculosis serotype O:1b (strain IP 31758).